Reading from the N-terminus, the 288-residue chain is MSAKIIDGKRLSQEVRAECRARAARLAEKGTQPGLAVVIVGDNPASRVYVRNKAKACGETGIYSEVHEFPENANQDEVIGRIQELNGNPGIHGILVQLPLPRHFDSSRVTESVAVEKDVDGFHLYNVGALVTGSSIFPPCTPNGVMKMLEKYDIPIEGQHAVIVGRSNIVGKPMALMLLQKGATVTICTSRTRNLAEHTSRADILIVAAGKPRLITAMMVKPGATVIDVGINRLSDGKLAGDVDFESVKEKAGYITPVPGGVGPMTIAMLLCNTVVAAEQAHARLQGN.

NADP(+)-binding positions include 165 to 167 (GRS), Ser-190, and Ile-231.

The protein belongs to the tetrahydrofolate dehydrogenase/cyclohydrolase family. As to quaternary structure, homodimer.

The enzyme catalyses (6R)-5,10-methylene-5,6,7,8-tetrahydrofolate + NADP(+) = (6R)-5,10-methenyltetrahydrofolate + NADPH. It catalyses the reaction (6R)-5,10-methenyltetrahydrofolate + H2O = (6R)-10-formyltetrahydrofolate + H(+). It functions in the pathway one-carbon metabolism; tetrahydrofolate interconversion. Functionally, catalyzes the oxidation of 5,10-methylenetetrahydrofolate to 5,10-methenyltetrahydrofolate and then the hydrolysis of 5,10-methenyltetrahydrofolate to 10-formyltetrahydrofolate. This chain is Bifunctional protein FolD, found in Nitrosospira multiformis (strain ATCC 25196 / NCIMB 11849 / C 71).